Consider the following 772-residue polypeptide: Angiomotin-like protein 2 (772 aa).

Disordered regions lie at residues 41-158, 170-239, and 260-299; these read GGAG…HVRS, RNGA…SPHF, and QYQY…PSAQ. Basic and acidic residues-rich tracts occupy residues 80 to 91, 100 to 112, and 142 to 153; these read QGGETHLAENRL, KGEE…EAKA, and RRQDEALRELRH. The required for interaction with CDH5 stretch occupies residues 101-303; the sequence is GEELPTYEEA…GPPSAQATLG (203 aa). Residue Tyr107 is modified to Phosphotyrosine; by FGFR1. Residues 178-191 are compositionally biased toward polar residues; sequence HMSSSHSFPQLARS. Pro residues predominate over residues 197-214; that stretch reads PRGPPAEGPEPRGPPPQY. The tract at residues 221–303 is required for interaction with CDH1; that stretch reads QETAAVTDPR…GPPSAQATLG (83 aa). Residues 305 to 578 are a coiled coil; it reads AHLAQMETVL…KYLEERAMRQ (274 aa). Glycyl lysine isopeptide (Lys-Gly) (interchain with G-Cter in ubiquitin) cross-links involve residues Lys343 and Lys404. Disordered regions lie at residues 596 to 615 and 680 to 752; these read IRHS…LLPG and GLVS…RTPS. Residues 686–699 are compositionally biased toward basic and acidic residues; sequence RQTDARPAGDRVPA. The span at 718 to 733 shows a compositional bias: polar residues; that stretch reads DGSTQTDGPADNTSAC. Ser752 and Ser755 each carry phosphoserine. The PDZ-binding motif lies at 769–772; it reads EILI.

Belongs to the angiomotin family. In terms of assembly, part of a complex composed of AMOTL2, MAGI1 and CDH5, within the complex AMOTL2 acts as a scaffold protein for the interaction of MAGI1 with CDH5. The complex is required for coupling actin fibers to cell junctions in endothelial cells. Within the complex AMOTL2 (via its N-terminus) interacts with CDH5. Interacts (via N-terminus) with MAGI1. Interacts (via N-terminus) with ACTB; the interaction facilitates binding of cell junction complexes to actin fibers in endothelial cells. Interacts with CDH1; the interaction may facilitate binding of radial actin fibers to cell junction complexes. Interacts with SRC. Interacts with YAP1; the interaction is required for ubiquitination of AMOTL2 and localization of YAP1 to tight junctions. Interacts with WWP1; the interaction facilitates WWP1 interaction with the Crumbs complex and subsequent WWP1 translocation to the plasma membrane. WWP1 interaction with the Crumbs complex promotes WWP1 monoubiquitination of AMOTL2 which subsequently activates the Hippo signaling pathway. When ubiquitinated interacts with LATS2 (via UBA domain); the interaction promotes LATS2 phosphorylation of YAP1. Interacts (via PPXY motif) with WWTR1/TAZ (via WW domain); the interaction promotes WWTR1/TAZ localization to the cytoplasm and thereby inhibition of its transcriptional properties. Interacts with PHLDB2; interaction may facilitate PHLDB2 localization to the myotube podosome cortex that surrounds the core. In terms of processing, phosphorylation at Tyr-107 is necessary for efficient binding to SRC and synergistically functioning with SRC to activate the downstream MAPK pathway. Post-translationally, monoubiquitinated at Lys-343 and Lys-404 by Crumbs complex-bound WWP1. De-ubiquitinated at Lys-343 and Lys-404 by USP9X; the interaction may be promoted by cell contact inhibition. Deubiquitination of AMOTL2 negatively regulates Hippo signaling activation. As to expression, expressed in skeletal muscle at neuromuscular junctions (at protein level).

The protein localises to the recycling endosome. The protein resides in the cytoplasm. It is found in the cell projection. Its subcellular location is the podosome. It localises to the cell junction. Functionally, regulates the translocation of phosphorylated SRC to peripheral cell-matrix adhesion sites. Required for proper architecture of actin filaments. Plays a role in coupling actin fibers to cell junctions in endothelial cells and is therefore required for correct endothelial cell morphology via facilitating transcellular transmission of mechanical force resulting in endothelial cell elongation. Required for the anchoring of radial actin fibers to CDH1 junction complexes at the cell membrane which facilitates organization of radial actin fiber structure and cellular response to contractile forces. This contributes to maintenance of cell area, size, shape, epithelial sheet organization and trophectoderm cell properties that facilitate blastocyst zona hatching. Inhibits the Wnt/beta-catenin signaling pathway, probably by recruiting CTNNB1 to recycling endosomes and hence preventing its translocation to the nucleus. Participates in angiogenesis. Activates the Hippo signaling pathway in response to cell contact inhibition via interaction with and ubiquitination by Crumbs complex-bound WWP1. Ubiquitinated AMOTL2 then interacts with LATS2 which in turn phosphorylates YAP1, excluding it from the nucleus and localizing it to the cytoplasm and tight junctions, therefore ultimately repressing YAP1-driven transcription of target genes. Acts to inhibit WWTR1/TAZ transcriptional coactivator activity via sequestering WWTR1/TAZ in the cytoplasm and at tight junctions. Regulates the size and protein composition of the podosome cortex and core at myofibril neuromuscular junctions. Selectively promotes FGF-induced MAPK activation through SRC. May play a role in the polarity, proliferation and migration of endothelial cells. The chain is Angiomotin-like protein 2 from Mus musculus (Mouse).